A 926-amino-acid polypeptide reads, in one-letter code: Serine/threonine-protein kinase/endoribonuclease IRE2 (926 aa).

Residues 1–34 (MASAVRGSRPWPRLGLQLQFAALLLGTLSPQVHT) form the signal peptide. At 35–430 (LRPENLLLVS…TPDSYLGLGP (396 aa)) the chain is on the lumenal side. The helical transmembrane segment at 431–451 (QDLLAASLTAVLLGGWILFVM) threads the bilayer. Topologically, residues 452-926 (RQQQPQVVEK…RRPCPGATGR (475 aa)) are cytoplasmic. Positions 478-501 (DAQSLHSGASRRSQKRLQSPSKQA) are enriched in polar residues. The segment at 478–509 (DAQSLHSGASRRSQKRLQSPSKQAQPLDDPEA) is disordered. The Protein kinase domain maps to 520–781 (FNPKDVLGRG…APQVLAHPFF (262 aa)). ATP-binding positions include 526–534 (LGRGAGGTF) and K548. Catalysis depends on D637, which acts as the Proton acceptor. The KEN domain maps to 784–912 (RAKQLQFFQD…ESLFLPYYPP (129 aa)).

This sequence belongs to the protein kinase superfamily. Ser/Thr protein kinase family. Requires Mg(2+) as cofactor. Autophosphorylated.

Its subcellular location is the endoplasmic reticulum membrane. It carries out the reaction L-seryl-[protein] + ATP = O-phospho-L-seryl-[protein] + ADP + H(+). The enzyme catalyses L-threonyl-[protein] + ATP = O-phospho-L-threonyl-[protein] + ADP + H(+). With respect to regulation, the kinase domain is activated by trans-autophosphorylation. Kinase activity is required for activation of the endoribonuclease domain. Functionally, induces translational repression through 28S ribosomal RNA cleavage in response to ER stress. Pro-apoptotic. Appears to play no role in the unfolded-protein response, unlike closely related proteins. This chain is Serine/threonine-protein kinase/endoribonuclease IRE2, found in Homo sapiens (Human).